The chain runs to 462 residues: Metal cation symporter ZIP14 (462 aa).

The first 16 residues, 1 to 16, serve as a signal peptide directing secretion; the sequence is MPLLLLSALLPFSLMA. The Extracellular segment spans residues 17 to 138; the sequence is GPTPSTGKEL…PSPGEVWGYG (122 aa). N-linked (GlcNAc...) asparagine glycosylation is found at asparagine 42, asparagine 68, asparagine 83, and asparagine 119. A helical transmembrane segment spans residues 139-159; it reads FLCVTVISLCSLFGAGVVPFM. At 160-167 the chain is on the cytoplasmic side; the sequence is KKACYKRL. Residues 168–188 form a helical membrane-spanning segment; sequence LLFCIALAIGTLFSNALFQLI. The Extracellular segment spans residues 189–201; that stretch reads PEAFGFNPLEDSY. The helical transmembrane segment at 202–222 threads the bilayer; that stretch reads VFTSSVIFGGFYLFFFTEKVL. Topologically, residues 223-322 are cytoplasmic; sequence KMMLKQKHEH…SDGLHNFIDG (100 aa). An HHHGHXHX-motif motif is present at residues 230-237; that stretch reads HEHGHSHY. Positions 235 to 285 are disordered; it reads SHYSADTSKRDAEEGVTEKLQNGDLDHMIPPPHGSESDLRGDEKAVQQQDL. Basic and acidic residues-rich tracts occupy residues 241-251 and 269-279; these read TSKRDAEEGVT and SESDLRGDEKA. The helical transmembrane segment at 323-343 threads the bilayer; the sequence is LAIGASFTVSVFQGVSTSIAI. Residues 344-367 lie on the Extracellular side of the membrane; sequence LCEEFPHELGDFVILLNAGMSIPQ. The XEXPHE-motif signature appears at 346 to 351; the sequence is EEFPHE. The helical transmembrane segment at 368 to 388 threads the bilayer; sequence ALFFNFLSACCCYLGLAFGIL. Residues 389–396 lie on the Cytoplasmic side of the membrane; sequence AGSHFSSN. Residues 397–417 form a helical membrane-spanning segment; sequence WIFALAGGMFLYIALSDMFPE. At 418–431 the chain is on the extracellular side; sequence MNEVSKEDEEGGRA. The helical transmembrane segment at 432-452 threads the bilayer; that stretch reads FSAFMIQNAGLLTGFAIMLLL. Residues 453 to 462 lie on the Cytoplasmic side of the membrane; it reads TTFSGQIQLG.

Belongs to the ZIP transporter (TC 2.A.5) family. Homotrimer.

Its subcellular location is the cell membrane. It is found in the apical cell membrane. The protein resides in the basolateral cell membrane. The protein localises to the early endosome membrane. It localises to the late endosome membrane. Its subcellular location is the lysosome membrane. The enzyme catalyses Zn(2+)(out) + 2 hydrogencarbonate(out) = Zn(2+)(in) + 2 hydrogencarbonate(in). It catalyses the reaction Mn(2+)(out) + 2 hydrogencarbonate(out) = Mn(2+)(in) + 2 hydrogencarbonate(in). The catalysed reaction is Fe(2+)(out) + 2 hydrogencarbonate(out) = Fe(2+)(in) + 2 hydrogencarbonate(in). It carries out the reaction Cd(2+)(out) + 2 hydrogencarbonate(out) = Cd(2+)(in) + 2 hydrogencarbonate(in). Functionally, electroneutral transporter of the plasma membrane mediating the cellular uptake of the divalent metal cations zinc, manganese and iron that are important for tissue homeostasis, metabolism, development and immunity. Functions as an energy-dependent symporter, transporting through the membranes an electroneutral complex composed of a divalent metal cation and two bicarbonate anions. Beside these endogenous cellular substrates, can also import cadmium a non-essential metal which is cytotoxic and carcinogenic. This chain is Metal cation symporter ZIP14, found in Xenopus tropicalis (Western clawed frog).